We begin with the raw amino-acid sequence, 1156 residues long: Mastermind-like protein 2 (1156 aa).

The interval 81 to 165 is disordered; the sequence is QHGQGARKAG…PPASTPGDQR (85 aa). The span at 113–122 shows a compositional bias: low complexity; it reads PAASQAAATA. Polar residues predominate over residues 153–165; that stretch reads EQQPPASTPGDQR. The residue at position 175 (Ser-175) is a Phosphoserine. Disordered regions lie at residues 340–359, 369–506, 531–630, 658–680, 705–743, 784–820, and 1059–1100; these read FNID…SLPM, SPGL…GSGQ, QQKP…QQQQ, QQQQ…QPLL, YQVS…GYMN, IAPQ…YSGG, and LPNL…FQGT. Polar residues-rich tracts occupy residues 344–354, 371–380, 393–419, and 428–437; these read LGQQSQRSTPR, GLTQGPSGSP, MANS…TGSG, and QEVSHAQQLK. Residues 440-470 show a composition bias toward low complexity; the sequence is AANRQQHARMQQHQQQHQPTNWSALPSSAGP. Polar residues-rich tracts occupy residues 484-496, 532-543, and 563-587; these read SFGQ…QSSP, QKPQDLSRSFIN, and NSDQ…LHYT. The segment covering 588–630 has biased composition (low complexity); that stretch reads QQQQQQQQQQQQQQQQQQQQQQQQQQQQQQQQQQSSISAQQQQ. Low complexity-rich tracts occupy residues 706 to 725 and 733 to 743; these read QVSQ…NTGP and SNPNTGSGYMN. The segment covering 807–820 has biased composition (polar residues); it reads NVGNMQPTAQYSGG.

It belongs to the mastermind family. As to quaternary structure, interacts through its N-terminal region with the ankyrin repeat region of the Notch proteins NOTCH1, NOTCH2, NOTCH3 and NOTCH4. Forms a DNA-binding complex with Notch proteins and RBPSUH/RBP-J kappa. Widely expressed with high levels detected in placenta, salivary gland and skeletal muscle.

It is found in the nucleus speckle. In terms of biological role, acts as a transcriptional coactivator for NOTCH proteins. Has been shown to amplify NOTCH-induced transcription of HES1. Potentiates activation by NOTCH3 and NOTCH4 more efficiently than MAML1 or MAML3. The chain is Mastermind-like protein 2 (MAML2) from Homo sapiens (Human).